The following is a 464-amino-acid chain: Argininosuccinate lyase (464 aa).

Belongs to the lyase 1 family. Argininosuccinate lyase subfamily.

It is found in the cytoplasm. The catalysed reaction is 2-(N(omega)-L-arginino)succinate = fumarate + L-arginine. It functions in the pathway amino-acid biosynthesis; L-arginine biosynthesis; L-arginine from L-ornithine and carbamoyl phosphate: step 3/3. Strongly inhibited by L-arginine. Inhibitory effects are lowered at pH 7.0 compared to those at pH 8.0. At 37 degrees Celsius and pH 7.5, activity decreases to 73% and 31% in the presence of 1 mM and 10 mM arginine, respectively. Activity also decreases to 84%, 93%, 82% and 85% in the presence of 10 mM sodium citrate, citrulline, asparatate and glutamate, respectively. Activity decreases to 96% in presence of 1 mM L-lysine. In terms of biological role, catalyzes the last step of arginine biosynthesis, the conversion of argininosuccinate into L-arginine and fumarate. In Arthrospira platensis (strain NIES-39 / UTEX 3086 / IAM M-135) (Spirulina platensis), this protein is Argininosuccinate lyase.